The following is a 70-amino-acid chain: Large ribosomal subunit protein eL38 (70 aa).

Belongs to the eukaryotic ribosomal protein eL38 family.

This Aedes aegypti (Yellowfever mosquito) protein is Large ribosomal subunit protein eL38 (RpL38).